Reading from the N-terminus, the 417-residue chain is NADH-quinone oxidoreductase subunit D (417 aa).

It belongs to the complex I 49 kDa subunit family. As to quaternary structure, NDH-1 is composed of 14 different subunits. Subunits NuoB, C, D, E, F, and G constitute the peripheral sector of the complex.

The protein resides in the cell inner membrane. The enzyme catalyses a quinone + NADH + 5 H(+)(in) = a quinol + NAD(+) + 4 H(+)(out). Its function is as follows. NDH-1 shuttles electrons from NADH, via FMN and iron-sulfur (Fe-S) centers, to quinones in the respiratory chain. The immediate electron acceptor for the enzyme in this species is believed to be ubiquinone. Couples the redox reaction to proton translocation (for every two electrons transferred, four hydrogen ions are translocated across the cytoplasmic membrane), and thus conserves the redox energy in a proton gradient. The sequence is that of NADH-quinone oxidoreductase subunit D from Nitrosomonas eutropha (strain DSM 101675 / C91 / Nm57).